A 275-amino-acid chain; its full sequence is NADPH-dependent 7-cyano-7-deazaguanine reductase (275 aa).

Residue 81–83 (IES) participates in substrate binding. Position 83-84 (83-84 (SK)) interacts with NADPH. Catalysis depends on Cys-181, which acts as the Thioimide intermediate. Asp-188 functions as the Proton donor in the catalytic mechanism. Residue 220-221 (HE) coordinates substrate. Residue 249–250 (RG) coordinates NADPH.

The protein belongs to the GTP cyclohydrolase I family. QueF type 2 subfamily. Homodimer.

The protein resides in the cytoplasm. It carries out the reaction 7-aminomethyl-7-carbaguanine + 2 NADP(+) = 7-cyano-7-deazaguanine + 2 NADPH + 3 H(+). It participates in tRNA modification; tRNA-queuosine biosynthesis. Functionally, catalyzes the NADPH-dependent reduction of 7-cyano-7-deazaguanine (preQ0) to 7-aminomethyl-7-deazaguanine (preQ1). The chain is NADPH-dependent 7-cyano-7-deazaguanine reductase from Xylella fastidiosa (strain M12).